We begin with the raw amino-acid sequence, 114 residues long: Protein ORF3 (114 aa).

The membrane association stretch occupies residues 1–28 (MGSRPCALGLFCCCSSCFCLCCPRHRPV). 2 hydrophobic regions span residues 6–22 (CALG…CLCC) and 33–53 (AAVG…GLIL). Residues 6–22 (CALGLFCCCSSCFCLCC) form an induction of host SIRPA expression region. Positions 28 to 68 (VSRLAAAVGGAAAVPAVVSGVTGLILSPSQSPIFIQPTPSP) are interaction with host HPX. Positions 48–72 (VTGLILSPSQSPIFIQPTPSPPMSP) are interaction with the capsid protein. At Ser-71 the chain carries Phosphoserine; by host. Positions 72-114 (PLRPGLDLVFANPPDHSAPLGVTRPSAPPLPHVVDLPQLGPRR) are homodimerization, and interaction with host AMBP/bikunin. Positions 91–114 (LGVTRPSAPPLPHVVDLPQLGPRR) are disordered. The interval 95–104 (RPSAPPLPHV) is interaction with host SRC, HCK, FYN, PIK3R3 and GRB2. A PTAP/PSAP motif motif is present at residues 96–99 (PSAP).

The protein belongs to the hepevirus ORF3 protein family. As to quaternary structure, forms homooligomers. Interacts with host SRC, HCK, FYN, PIK3R3 and GRB2 (via SH3 domain); binding does not activate the kinases. Interacts with host AMBP/bikunin and AMBP/alpha-1-microglobulin peptides. Interacts with host HPX/hemopexin. Interacts (when phosphorylated) with capsid protein ORF2. Interacts with host TSG101; this interaction plays a role in viral release from the host cell. Interacts with host SIRPA; this interaction down-regulates the phosphorylation of host IRF3. In terms of processing, palmitoylated in the N-terminus.

It localises to the host endoplasmic reticulum membrane. The protein resides in the host cytoplasm. Its subcellular location is the host cytoskeleton. It is found in the virion. The protein localises to the host cell membrane. Its function is as follows. Small multifunctional phosphoprotein involved in virion morphogenesis, egress and counteracting host innate immunity. Plays critical roles in the final steps of viral release by interacting with host TSG101, a member of the vacuolar protein-sorting pathway and using other cellular host proteins involved in vesicle formation pathway. Also acts as a viroporin and forms ion conductive pores allowing viral particle release. Impairs the generation of type I interferon by down-regulating host TLR3 and TLR7 as well as their downstream signaling pathways. Down-regulates the phosphorylation of host IRF3 via the interaction with host SIRP-alpha, thereby inhibiting IFN-I expression. Interacts with host microtubules. This chain is Protein ORF3, found in Hepatitis E virus genotype 1 (isolate Human/China/HeBei/1987) (HEV).